The sequence spans 309 residues: MEFKHISVLLEETIDSLNIKEDGVYVDCTLGGGGHSKEILKKLSHKGKLIGIDQDTSAIKAAKERLKDYENVIYVHNNFYNIDSILEELDIDKVDGIIMDLGVSSYQLDEASRGFSYMKDAPLDMRMNREENLSAYGVINNYKEEELFKILKNYGEEKFSRKIARFIVEKRTENPIETTGELVEIIRKAIPAKFQREGHPAKRTFQAIRIEVNKELQILNKAIEDSVNRLNKDGRLSIITFHSLEDRIVKVKFKELEKPCTCPPSFPICVCGKEPQIKIITKKPIEPSKEEKEINSRSRSAKLRVCRKI.

S-adenosyl-L-methionine is bound by residues 33 to 35 (GGH), D53, F79, D100, and Q107.

It belongs to the methyltransferase superfamily. RsmH family.

It is found in the cytoplasm. The enzyme catalyses cytidine(1402) in 16S rRNA + S-adenosyl-L-methionine = N(4)-methylcytidine(1402) in 16S rRNA + S-adenosyl-L-homocysteine + H(+). Specifically methylates the N4 position of cytidine in position 1402 (C1402) of 16S rRNA. This chain is Ribosomal RNA small subunit methyltransferase H, found in Clostridium botulinum (strain 657 / Type Ba4).